A 564-amino-acid chain; its full sequence is Hexose transporter HXT17 (564 aa).

A compositionally biased stretch (basic and acidic residues) spans 1 to 12; the sequence is MQSSTESDRDIQ. The disordered stretch occupies residues 1 to 22; sequence MQSSTESDRDIQDGPDADIHVA. The Cytoplasmic segment spans residues 1–52; the sequence is MQSSTESDRDIQDGPDADIHVAPPVEKEWSDGFDDNEVINGDNVEPPKRGLI. A helical transmembrane segment spans residues 53 to 73; the sequence is GYLVIYLLCYPISFGGFLPGW. Residues 74-109 are Extracellular-facing; sequence DSGITAGFINMDNFKMNFGSYKHSTGEYYLSNVRMG. A helical membrane pass occupies residues 110–130; sequence LLVAMFSIGCAIGGLIFARLA. Over 131 to 136 the chain is Cytoplasmic; it reads DTLGRR. The chain crosses the membrane as a helical span at residues 137–157; that stretch reads LAIVIVVLVYMVGAIIQISSN. Over 158-167 the chain is Extracellular; the sequence is HKWYQYFVGK. The helical transmembrane segment at 168–188 threads the bilayer; it reads IIYGLGAGGCSVLCPMLLSEI. Topologically, residues 189 to 194 are cytoplasmic; it reads APTDLR. Residues 195–215 traverse the membrane as a helical segment; that stretch reads GGLVSLYQLNMTFGIFLGYCS. At 216–229 the chain is on the extracellular side; the sequence is VYGTRKYDNTAQWR. The helical transmembrane segment at 230–250 threads the bilayer; it reads VPLGLCFLWTLIIIIGMLLVP. Topologically, residues 251–333 are cytoplasmic; the sequence is ESPRYLIECE…VQTFLQLTGE (83 aa). Residues 334–350 form a helical membrane-spanning segment; sequence NYFFFYGTTIFKSVGLT. The Extracellular segment spans residues 351–356; it reads DGFETS. Residues 357–374 form a helical membrane-spanning segment; sequence IVLGTVNFFSTIIAVMVV. Topologically, residues 375–381 are cytoplasmic; it reads DKIGRRK. A helical membrane pass occupies residues 382 to 402; it reads CLLFGAAGMMACMVIFASIGV. Topologically, residues 403 to 424 are extracellular; sequence KCLYPHGQDGPSSKGAGNAMIV. A helical membrane pass occupies residues 425 to 445; sequence FTCFYIFCFATTWAPVAYIVV. At 446–462 the chain is on the cytoplasmic side; that stretch reads AESFPSKVKSRAMSIST. Residues 463–483 traverse the membrane as a helical segment; sequence ACNWLWQFLIGFFTPFITGSI. His484 is a topological domain (extracellular). The helical transmembrane segment at 485–505 threads the bilayer; that stretch reads FYYGYVFVGCLVAMFLYVFFF. At 506-564 the chain is on the cytoplasmic side; the sequence is LPETIGLSLEEIQLLYEEGIKPWKSASWVPPSRRGIPSEESKTEKKDWKKFLKFSKGSD.

It belongs to the major facilitator superfamily. Sugar transporter (TC 2.A.1.1) family.

It localises to the membrane. Functionally, probable glucose transporter. In Saccharomyces cerevisiae (strain ATCC 204508 / S288c) (Baker's yeast), this protein is Hexose transporter HXT17 (HXT17).